Consider the following 187-residue polypeptide: NADH-quinone oxidoreductase subunit B (187 aa).

Positions 66, 67, 131, and 161 each coordinate [4Fe-4S] cluster.

The protein belongs to the complex I 20 kDa subunit family. In terms of assembly, NDH-1 is composed of 14 different subunits. Subunits NuoB, C, D, E, F, and G constitute the peripheral sector of the complex. The cofactor is [4Fe-4S] cluster.

It is found in the cell inner membrane. It carries out the reaction a quinone + NADH + 5 H(+)(in) = a quinol + NAD(+) + 4 H(+)(out). Its function is as follows. NDH-1 shuttles electrons from NADH, via FMN and iron-sulfur (Fe-S) centers, to quinones in the respiratory chain. Couples the redox reaction to proton translocation (for every two electrons transferred, four hydrogen ions are translocated across the cytoplasmic membrane), and thus conserves the redox energy in a proton gradient. This chain is NADH-quinone oxidoreductase subunit B, found in Rhizorhabdus wittichii (strain DSM 6014 / CCUG 31198 / JCM 15750 / NBRC 105917 / EY 4224 / RW1) (Sphingomonas wittichii).